Here is a 47-residue protein sequence, read N- to C-terminus: Diuretic hormone 2 (47 aa).

It belongs to the sauvagine/corticotropin-releasing factor/urotensin I family.

Its subcellular location is the secreted. Its function is as follows. Stimulates fluid secretion by the Malpighian tubules. Increases cyclic AMP production in Malpighian tubules. The sequence is that of Diuretic hormone 2 from Tenebrio molitor (Yellow mealworm beetle).